Reading from the N-terminus, the 511-residue chain is Maturase K (511 aa).

Belongs to the intron maturase 2 family. MatK subfamily.

It localises to the plastid. It is found in the chloroplast. Functionally, usually encoded in the trnK tRNA gene intron. Probably assists in splicing its own and other chloroplast group II introns. In Oryza nivara (Indian wild rice), this protein is Maturase K.